The primary structure comprises 165 residues: Photosystem I assembly protein Ycf3 (165 aa).

TPR repeat units lie at residues 32 to 65, 69 to 102, and 117 to 150; these read AFTYYRDGMSAQSEGNYAEALQNYYEAMRLEIDP, SYILYNIGLIHTSNGEHTKALEYYFRALERNPFL, and GEQAIRQGDSEIAEAWFDQAAEYWKQALTLTPGN.

Belongs to the Ycf3 family.

It is found in the plastid. It localises to the chloroplast thylakoid membrane. Its function is as follows. Essential for the assembly of the photosystem I (PSI) complex. May act as a chaperone-like factor to guide the assembly of the PSI subunits. This chain is Photosystem I assembly protein Ycf3, found in Spinacia oleracea (Spinach).